The following is a 159-amino-acid chain: uncharacterized protein (159 aa).

4 consecutive transmembrane segments (helical) span residues 5 to 27 (TLDL…RGFV), 34 to 51 (ASIL…KRLV), 61 to 83 (SILL…MLFL), and 103 to 125 (FGFF…LLHV).

It is found in the cell membrane. This is an uncharacterized protein from Treponema pallidum (strain Nichols).